The following is a 385-amino-acid chain: Deoxyguanosinetriphosphate triphosphohydrolase-like protein (385 aa).

Positions 75–204 (RLTHSLEVAQ…INFADEIAYN (130 aa)) constitute an HD domain.

It belongs to the dGTPase family. Type 2 subfamily.

This Geobacter sulfurreducens (strain ATCC 51573 / DSM 12127 / PCA) protein is Deoxyguanosinetriphosphate triphosphohydrolase-like protein.